We begin with the raw amino-acid sequence, 967 residues long: Leucine--tRNA ligase (967 aa).

The 'HIGH' region signature appears at 43-53; that stretch reads PYLSGHLHVGH. The short motif at 650–654 is the 'KMSKS' region element; sequence KMSKS. An ATP-binding site is contributed by Lys-653.

It belongs to the class-I aminoacyl-tRNA synthetase family.

It localises to the cytoplasm. It carries out the reaction tRNA(Leu) + L-leucine + ATP = L-leucyl-tRNA(Leu) + AMP + diphosphate. This is Leucine--tRNA ligase from Pyrococcus abyssi (strain GE5 / Orsay).